A 197-amino-acid polypeptide reads, in one-letter code: Probable nicotinate-nucleotide adenylyltransferase (197 aa).

Belongs to the NadD family.

It carries out the reaction nicotinate beta-D-ribonucleotide + ATP + H(+) = deamido-NAD(+) + diphosphate. It participates in cofactor biosynthesis; NAD(+) biosynthesis; deamido-NAD(+) from nicotinate D-ribonucleotide: step 1/1. Catalyzes the reversible adenylation of nicotinate mononucleotide (NaMN) to nicotinic acid adenine dinucleotide (NaAD). This is Probable nicotinate-nucleotide adenylyltransferase from Porphyromonas gingivalis (strain ATCC 33277 / DSM 20709 / CIP 103683 / JCM 12257 / NCTC 11834 / 2561).